Here is a 649-residue protein sequence, read N- to C-terminus: MGEAVYPVPAEWAQNALVDEARYQDMYRQSVDDPEGFWAEHGKRIDWIRPFTKVKNTSFHEADFGIRWFEDGTLNLAANCLDRHLAERGDEIAILWEPDSPDEAHREITYRQLHADVCRFANLLKAKGVQKGERVTIYLPMVPEAAVAMLACARIGAIHSIVFAGFSPDALAGRITDCDSRIVLTSDEGLRGGRKVPLKANVDEALKQCPGVDTVIMLRRTGADVDFVEGRDIDWATAVAEQSADCQPEEMNAEDPLFILYTSGSTGKPKGVLHTTGGYSVWASMTHQYVFDYRPGQIYWCAADIGWVTGHSYVVYGPLMNGATTVMFEGVPNFPDASRFWQVVDKFKVEIFYGAPTALRALMREGDEWVKKTSRASLRLLGSVGEPINPEAWEWYHKVVGDSRCPIVDTWWQTETGGAMITPLPGATALKPGSASRPFFGVKPALVDNDGTFLEGATDGCLVVTDSWPGQMRTVWGDHERFFQTYFTTFKGLYFTGDGCRRDEDGYYWITGRIDDVINVSGHRMGTAEIESALVAHPKVAEAAVVGMPHDIKGQGIYAFVTCNAEIEPDDLLRKELIQWVRHEIGPIATPDVIQFAPGLPKTRSGKIMRRILRKIGENDVSNLGDTSTLADPSVVDNLLANRPQLAGA.

CoA contacts are provided by residues 191-194 (RGGR), Thr309, and Asn333. ATP contacts are provided by residues 385–387 (GEP), 409–414 (DTWWQT), Asp498, and Arg513. Ser521 provides a ligand contact to CoA. Position 524 (Arg524) interacts with ATP. Mg(2+) is bound by residues Val535, His537, and Val540. Arg582 provides a ligand contact to CoA. The residue at position 607 (Lys607) is an N6-acetyllysine.

It belongs to the ATP-dependent AMP-binding enzyme family. It depends on Mg(2+) as a cofactor. In terms of processing, acetylated. Deacetylation by the SIR2-homolog deacetylase activates the enzyme.

The catalysed reaction is acetate + ATP + CoA = acetyl-CoA + AMP + diphosphate. In terms of biological role, catalyzes the conversion of acetate into acetyl-CoA (AcCoA), an essential intermediate at the junction of anabolic and catabolic pathways. AcsA undergoes a two-step reaction. In the first half reaction, AcsA combines acetate with ATP to form acetyl-adenylate (AcAMP) intermediate. In the second half reaction, it can then transfer the acetyl group from AcAMP to the sulfhydryl group of CoA, forming the product AcCoA. In Novosphingobium aromaticivorans (strain ATCC 700278 / DSM 12444 / CCUG 56034 / CIP 105152 / NBRC 16084 / F199), this protein is Acetyl-coenzyme A synthetase.